Reading from the N-terminus, the 457-residue chain is Bifunctional F420 biosynthesis protein FbiB (457 aa).

The segment at 1 to 253 (MTSSDSHRSA…NGPDDLFWLG (253 aa)) is coenzyme F420:L-glutamate ligase. GTP is bound by residues 29–32 (LPEF), Ser-59, and Lys-64. Asp-118 lines the a divalent metal cation pocket. Asn-121 provides a ligand contact to GTP. The a divalent metal cation site is built by Asp-159 and Thr-160. The dehydro-coenzyme F420-0 reductase stretch occupies residues 254 to 457 (TTEALELGRQ…VRVADLLLRK (204 aa)). Residues 269-273 (RRSVR) and Ala-297 each bind FMN. Asp-329 provides a ligand contact to coenzyme F420-(gamma-Glu)n. Positions 408 and 445 each coordinate FMN.

This sequence in the N-terminal section; belongs to the CofE family. Requires Mg(2+) as cofactor. Mn(2+) serves as cofactor. It depends on K(+) as a cofactor.

The catalysed reaction is oxidized coenzyme F420-0 + GTP + L-glutamate = oxidized coenzyme F420-1 + GDP + phosphate + H(+). It carries out the reaction oxidized coenzyme F420-1 + GTP + L-glutamate = oxidized coenzyme F420-2 + GDP + phosphate + H(+). The enzyme catalyses oxidized coenzyme F420-(gamma-L-Glu)(n) + GTP + L-glutamate = oxidized coenzyme F420-(gamma-L-Glu)(n+1) + GDP + phosphate + H(+). It catalyses the reaction oxidized coenzyme F420-0 + FMN + H(+) = dehydro coenzyme F420-0 + FMNH2. Its pathway is cofactor biosynthesis; coenzyme F420 biosynthesis. Functionally, bifunctional enzyme that catalyzes the GTP-dependent successive addition of multiple gamma-linked L-glutamates to the L-lactyl phosphodiester of 7,8-didemethyl-8-hydroxy-5-deazariboflavin (F420-0) to form polyglutamated F420 derivatives, and the FMNH2-dependent reduction of dehydro-F420-0 to form F420-0. The chain is Bifunctional F420 biosynthesis protein FbiB from Mycobacterium leprae (strain TN).